A 167-amino-acid chain; its full sequence is Ubiquitin-fold modifier-conjugating enzyme 1 (167 aa).

C116 (glycyl thioester intermediate) is an active-site residue.

It belongs to the ubiquitin-conjugating enzyme family. UFC1 subfamily. In terms of assembly, interacts with UBA5 (via C-terminus). Interacts with UFL1. Interacts with UFM1.

In terms of biological role, E2-like enzyme which specifically catalyzes the second step in ufmylation. Accepts the ubiquitin-like modifier UFM1 from the E1 enzyme UBA5 and forms an intermediate with UFM1 via a thioester linkage. Ufmylation is involved in various processes, such as ribosome recycling, response to DNA damage, interferon response or reticulophagy (also called ER-phagy). The sequence is that of Ubiquitin-fold modifier-conjugating enzyme 1 from Osmerus mordax (Rainbow smelt).